Here is a 184-residue protein sequence, read N- to C-terminus: Rubrerythrin-2 (184 aa).

One can recognise a Ferritin-like diiron domain in the interval 2-146 (SVKNAMTADF…DAQDSAKENK (145 aa)). Fe(3+) is bound by residues Glu19, Glu52, Glu94, Glu97, Glu128, His131, Cys156, Cys159, Cys171, and Cys174. A Rubredoxin-like domain is found at 151–184 (GKVYICPVCGFTTLDENIEQCPICGVKKDKFQAF).

Fe(3+) serves as cofactor.

The enzyme catalyses H2O2 + NADH + H(+) = NAD(+) + 2 H2O. With respect to regulation, rubredoxin (Rd) increases the NADH consumption rate by serving as an intermediary electron-transfer shuttle between NROR and Rbr2. Functions as the terminal component of an NADH peroxidase (NADH:H(2)O(2) oxidoreductase) when using NADH:rubredoxin oxidoreductase (NROR) as the electron transport intermediary from NADH to Rbr2. The chain is Rubrerythrin-2 (rbr2) from Clostridium acetobutylicum (strain ATCC 824 / DSM 792 / JCM 1419 / IAM 19013 / LMG 5710 / NBRC 13948 / NRRL B-527 / VKM B-1787 / 2291 / W).